Reading from the N-terminus, the 690-residue chain is Crooked neck-like protein 1 (690 aa).

HAT repeat units lie at residues 61–93, 95–127, 129–161, 163–194, 196–227, 229–264, 266–300, 310–342, 344–378, 388–424, 459–491, 493–527, 529–560, 565–606, 608–646, and 648–673; these read DYKL…WEES, KEIQ…MEMK, RQVN…MEEM, GNVA…FELR, KEVE…FEEK, AYFA…FEEN, KEFE…FEKK, IIVS…LVES, AEAD…LWVN, KDPE…FEIR, REFD…LETI, GDIE…FEIE, EETE…FELS, GSVA…EFGT, SDKE…YIFP, and DAAN…EREA. Positions 250 to 467 are mediates interaction with HSP90; sequence MDEHLYVAFA…LREFDRCRKL (218 aa). Serine 342 is modified (phosphoserine). Residues 618 to 626 carry the Nuclear localization signal motif; the sequence is PEKVKKRRK. Residues 667 to 679 show a composition bias toward basic and acidic residues; it reads QQQEREAAEQDPD. The segment at 667–690 is disordered; that stretch reads QQQEREAAEQDPDKDIDESESSSF. A compositionally biased stretch (acidic residues) spans 680 to 690; that stretch reads KDIDESESSSF. At serine 689 the chain carries Phosphoserine.

It belongs to the crooked-neck family. Identified in the spliceosome C complex. Present in a spliceosome complex assembled in vitro containing CRNKL1, HPRP8BP and SNRPB2. Component of the minor spliceosome, which splices U12-type introns. Interacts with PPIL2 (via the PPIase cyclophilin-type domain); they may form a trimeric complex with HSP90.

Its subcellular location is the nucleus. The protein localises to the nucleus speckle. Involved in pre-mRNA splicing process. As a component of the minor spliceosome, involved in the splicing of U12-type introns in pre-mRNAs. In Mus musculus (Mouse), this protein is Crooked neck-like protein 1 (Crnkl1).